A 340-amino-acid polypeptide reads, in one-letter code: DNA-directed RNA polymerase subunit alpha (340 aa).

The alpha N-terminal domain (alpha-NTD) stretch occupies residues 1–236 (MLSLSKNWNT…EQLQLFISFE (236 aa)). Positions 251–340 (FSPYLLKRVD…LSKRYEDSYN (90 aa)) are alpha C-terminal domain (alpha-CTD).

It belongs to the RNA polymerase alpha chain family. In terms of assembly, homodimer. The RNAP catalytic core consists of 2 alpha, 1 beta, 1 beta' and 1 omega subunit. When a sigma factor is associated with the core the holoenzyme is formed, which can initiate transcription.

The enzyme catalyses RNA(n) + a ribonucleoside 5'-triphosphate = RNA(n+1) + diphosphate. Its function is as follows. DNA-dependent RNA polymerase catalyzes the transcription of DNA into RNA using the four ribonucleoside triphosphates as substrates. The sequence is that of DNA-directed RNA polymerase subunit alpha from Rickettsia akari (strain Hartford).